A 369-amino-acid chain; its full sequence is MLLDMDLGVLLPSLQSVYVLVFYFVYLAVAGEILPGKVIRGVLLSDGSQLRYRCNGLLALILLVAILGICAKLGIVSPLVVADRGLELLSATFIFCVLVTLALYVTGRSSSNKGSSLKPHVSGNLVHDWWFGIQLNPQFMSIDLKFFFVRAGMMGWLLINLSILAKSVQDGSLSQSMILYQIFCALYILDYFVHEEYMTSTWDIIAERLGFMLVFGDLLWIPFTFSIQGWWLLHNKVELTVPAIVVNCLVFLIGYMVFRGANKQKHIFKKNPKTPIWGKPPVVVGGKLLVSGYWGIARHCNYLGDLMLALSFSLPCGISSPVPYFYPIYLLILLIWRERRDEVRCAEKYKEIWAEYLRLVPWRILPYVY.

Helical transmembrane passes span Q15–L34, C54–V76, L86–V105, F146–V168, I178–E195, R208–W230, and T240–N262. NADP(+) is bound by residues K265, K269, L289, W294, and N301 to Y302. A helical membrane pass occupies residues P275–A297. The helical transmembrane segment at G317 to W336 threads the bilayer. Residues D341, C345–Y349, and Y356 each bind NADP(+).

The protein belongs to the ERG4/ERG24 family.

The protein resides in the membrane. It catalyses the reaction 4,4-dimethyl-5alpha-cholesta-8,24-dien-3beta-ol + NADP(+) = 4,4-dimethyl-5alpha-cholesta-8,14,24-trien-3beta-ol + NADPH + H(+). Its pathway is steroid biosynthesis; zymosterol biosynthesis; zymosterol from lanosterol: step 2/6. Reduces the C14=C15 double bond of 4,4-dimethyl-cholesta-8,14,24-trienol to produce 4,4-dimethyl-cholesta-8,24-dienol. Required for cell division and expansion and is involved in proper organization of the embryo. This chain is Delta(14)-sterol reductase (FK), found in Arabidopsis thaliana (Mouse-ear cress).